The primary structure comprises 595 residues: Probable serine/threonine-protein kinase fhkC (595 aa).

The tract at residues 1–84 (MNSNKEETTA…MTEDNSKEED (84 aa)) is disordered. Low complexity predominate over residues 18 to 31 (EEQQQQQQPQQQEQ). Residues 32-49 (INTTTASTTSNGENTASD) show a composition bias toward polar residues. Positions 50-70 (NNNNSNNNNNNNTNNTNTNNN) are enriched in low complexity. The 55-residue stretch at 116–170 (IILGRSKGVCNYTFTSPTVSGKHCKIYRDPTVKSRNVAFVDDTSTNGTFINNEVI) folds into the FHA domain. The 262-residue stretch at 218 to 479 (YDLREVLGTG…IDQALNHPWF (262 aa)) folds into the Protein kinase domain. Residues 224–232 (LGTGNFASV) and Lys-247 each bind ATP. Asp-342 (proton acceptor) is an active-site residue. At Thr-377 the chain carries Phosphothreonine; by autocatalysis. The tract at residues 494-595 (KLEFPPPSTN…DEHEQKKVKN (102 aa)) is disordered. The segment covering 508–520 (PTPNTTSSNSQLV) has biased composition (polar residues). A compositionally biased stretch (low complexity) spans 530-567 (DNTTDNNNNNNNNNNNNNNNNNNNTTNNSNNIDNNNGN). A compositionally biased stretch (basic and acidic residues) spans 585–595 (NDEHEQKKVKN).

This sequence belongs to the protein kinase superfamily. CAMK Ser/Thr protein kinase family. CHK2 subfamily.

It carries out the reaction L-seryl-[protein] + ATP = O-phospho-L-seryl-[protein] + ADP + H(+). The catalysed reaction is L-threonyl-[protein] + ATP = O-phospho-L-threonyl-[protein] + ADP + H(+). The sequence is that of Probable serine/threonine-protein kinase fhkC (fhkC) from Dictyostelium discoideum (Social amoeba).